The chain runs to 489 residues: Endoglucanase 4 (489 aa).

The first 25 residues, 1–25 (MAGKSFMTPAIMLAMLLLISPETYA), serve as a signal peptide directing secretion. The active-site Nucleophile is the Asp-81. His-409 is an active-site residue. Residue Asn-453 is glycosylated (N-linked (GlcNAc...) asparagine). Active-site residues include Asp-460 and Glu-469.

Belongs to the glycosyl hydrolase 9 (cellulase E) family.

The protein resides in the secreted. The enzyme catalyses Endohydrolysis of (1-&gt;4)-beta-D-glucosidic linkages in cellulose, lichenin and cereal beta-D-glucans.. The protein is Endoglucanase 4 of Arabidopsis thaliana (Mouse-ear cress).